The following is a 592-amino-acid chain: MEAITKNGSLSQTLVHCGPKSLSSFIPVRCLRFSKNPFPKKLVVTRARTSINSDHEAANRPLFQFPPSLLDDRFLSISANQSEIDSLGRDIEALKAKVSEKLVCMDVKERIHLIHLLVSLGVAYHFEKQIEEFLKVDFENVEDMNLGEEDMYSISVIFRVFRLYRHKLSSDVFNRFKEENGDFKKCLLDDVRGMLSFYEASYFGTNTEEILDEAMGFTRKHLELFVGGSNEEHLSGHIKNVLYLSQQENAEVVMSREYIQFYEQETHHDETLLKFAKINFKFMQLHYVQELQTIVKWWKELDLESKIPNYYRVRAVECLYWAMAVYMEPQYSVARIILSKSLVLWTIIDDLYDAYCTLPEAIAFTENMERWETDAKDMPDHMKVLMRSFIDLHEDFKREVILEGRLYSVEYGIDECKRLFREDLKLSKWARTGYIPNYDEYMEVGIVTAGIDMTVAFAFIGMGEAGKEAFDWIRSRPKFIQTLDIKGRLRDDVATYKDEMARGEIATGINCYMKQYKVTEEEAFLEFHRRIKHTSKLVNEEYFKTTVPLKLVRIAFNVGRAIDTNYKHGDGLTYGGIVEGQITSLFLDLITI.

Residues 1 to 52 (MEAITKNGSLSQTLVHCGPKSLSSFIPVRCLRFSKNPFPKKLVVTRARTSIN) constitute a chloroplast transit peptide. 5 residues coordinate Mg(2+): Asp349, Asp353, Asp491, Thr495, and Glu499. Residues 349–353 (DDLYD) carry the DDXXD motif motif.

The protein belongs to the terpene synthase family. Tpsa subfamily. Mg(2+) serves as cofactor. Mn(2+) is required as a cofactor.

It localises to the plastid. The protein resides in the chloroplast. The enzyme catalyses (2E,6E,10E)-geranylgeranyl diphosphate + H2O = (3E,7E)-dolabella-3,7-dien-18-ol + diphosphate. It catalyses the reaction (2E,6E,10E)-geranylgeranyl diphosphate = (3E,7E)-dolathalia-3,7,11-triene + diphosphate. It functions in the pathway secondary metabolite biosynthesis; terpenoid biosynthesis. Functionally, involved in the biosynthesis of diterpenes in roots. Possesses dolabella-3,7-dien-18-ol synthase activity and dolathalia-3,7,11-triene synthase activity in vitro. Catalyzes the formation of dolabella-3,7-dien-18-ol and dolathalia-3,7,11-triene from geranygeranyl diphosphate (GGPP). Does not seem to be involved in sesquiterpene biosynthesis. The protein is Bifunctional dolabella-3,7-dien-18-ol synthase/dolathalia-3,7,11-triene synthase TPS20, chloroplastic of Arabidopsis thaliana (Mouse-ear cress).